A 524-amino-acid polypeptide reads, in one-letter code: GMP synthase [glutamine-hydrolyzing] (524 aa).

A Glutamine amidotransferase type-1 domain is found at 12–201 (TILVLDFGSQ…AVDICKASQS (190 aa)). Cysteine 88 (nucleophile) is an active-site residue. Active-site residues include histidine 175 and glutamate 177. Residues 202-399 (WNMENFIDTE…LGISHELVWR (198 aa)) enclose the GMPS ATP-PPase domain. 230-236 (SGGVDST) serves as a coordination point for ATP. 4 residues coordinate XMP: arginine 303, aspartate 461, lysine 516, and glutamate 522.

In terms of assembly, homodimer. The cofactor is Mg(2+).

The protein resides in the cytoplasm. The protein localises to the cytosol. It carries out the reaction XMP + L-glutamine + ATP + H2O = GMP + L-glutamate + AMP + diphosphate + 2 H(+). Its pathway is purine metabolism; GMP biosynthesis; GMP from XMP (L-Gln route): step 1/1. Catalyzes the conversion of xanthine monophosphate (XMP) to GMP in the presence of glutamine and ATP through an adenyl-XMP intermediate. The sequence is that of GMP synthase [glutamine-hydrolyzing] (GUA1) from Kluyveromyces lactis (strain ATCC 8585 / CBS 2359 / DSM 70799 / NBRC 1267 / NRRL Y-1140 / WM37) (Yeast).